Consider the following 524-residue polypeptide: Thioredoxin reductase 2, mitochondrial (524 aa).

A mitochondrion-targeting transit peptide spans 1-34 (MVAAMVAALRGPSRRFRPRTRALTRGTRGAASAA). 41-70 (DLLVIGGGSGGLACAKEAAQLGKKVAVADY) contributes to the FAD binding site. At Lys79 the chain carries N6-succinyllysine. The cysteines at positions 86 and 91 are disulfide-linked. 2 positions are modified to N6-succinyllysine: Lys175 and Lys329. His497 acts as the Proton acceptor in catalysis. Positions 522–523 (CU) form a cross-link, cysteinyl-selenocysteine (Cys-Sec). Position 523 (Sec523) is a non-standard amino acid, selenocysteine.

This sequence belongs to the class-I pyridine nucleotide-disulfide oxidoreductase family. As to quaternary structure, homodimer. FAD is required as a cofactor. Expressed in liver, heart, testis and kidney.

It localises to the mitochondrion. The catalysed reaction is [thioredoxin]-dithiol + NADP(+) = [thioredoxin]-disulfide + NADPH + H(+). Its function is as follows. Involved in the control of reactive oxygen species levels and the regulation of mitochondrial redox homeostasis. Maintains thioredoxin in a reduced state. May play a role in redox-regulated cell signaling. In Mus musculus (Mouse), this protein is Thioredoxin reductase 2, mitochondrial.